A 495-amino-acid polypeptide reads, in one-letter code: Tripartite motif-containing protein 5 (495 aa).

A2 carries the post-translational modification N-acetylalanine. Residues 15–60 (CPICLELLTEPLSLHCGHSFCQACITANHKKSMLYKEGERSCPVCR) form an RING-type zinc finger. Position 87 is a phosphoserine (S87). The segment at 92–133 (QKVDHCARHGEKLLLFCQEDRKVICWLCERSQEHRGHHTFLM) adopts a B box-type zinc-finger fold. 4 residues coordinate Zn(2+): C97, H100, C119, and H125. Residues 137–225 (AQEYHVKLQT…LTKSETEMVQ (89 aa)) adopt a coiled-coil conformation. The segment at 187-200 (FEQLREILDWEESN) is required for interaction with GABARAP and for autophagy. In terms of domain architecture, B30.2/SPRY spans 283-495 (LKGMLDMFRE…VPMTLCSPSS (213 aa)).

The protein belongs to the TRIM/RBCC family. Can form homodimers and homotrimers. In addition to lower-order dimerization, also exhibits a higher-order multimerization and both low- and high-order multimerizations are essential for its restriction activity. Interacts with BTBD1 and BTBD2. Interacts with PSMC4, PSMC5, PSMD7 and HSPA8/HSC70. Interacts (via B30.2/SPRY domain) with HSPA1A/B. Interacts with PSMC2, MAP3K7/TAK1, TAB2 and TAB3. Interacts with SQSTM1. Interacts with TRIM6 and TRIM34. Interacts with ULK1 (phosphorylated form), GABARAP, GABARAPL1, GABARAPL2, MAP1LC3A, MAP1LC3C and BECN1. Post-translationally, degraded in a proteasome-independent fashion in the absence of viral infection but in a proteasome-dependent fashion following exposure to restriction sensitive virus. In terms of processing, autoubiquitinated in a RING finger- and UBE2D2-dependent manner. Monoubiquitinated by TRIM21. Deubiquitinated by Yersinia YopJ. Ubiquitination may not lead to proteasomal degradation.

The protein localises to the cytoplasm. The protein resides in the nucleus. The enzyme catalyses S-ubiquitinyl-[E2 ubiquitin-conjugating enzyme]-L-cysteine + [acceptor protein]-L-lysine = [E2 ubiquitin-conjugating enzyme]-L-cysteine + N(6)-ubiquitinyl-[acceptor protein]-L-lysine.. It functions in the pathway protein modification; protein ubiquitination. Capsid-specific restriction factor that prevents infection from non-host-adapted retroviruses. Blocks viral replication early in the life cycle, after viral entry but before reverse transcription. In addition to acting as a capsid-specific restriction factor, also acts as a pattern recognition receptor that activates innate immune signaling in response to the retroviral capsid lattice. Binding to the viral capsid triggers its E3 ubiquitin ligase activity, and in concert with the heterodimeric ubiquitin conjugating enzyme complex UBE2V1-UBE2N (also known as UBC13-UEV1A complex) generates 'Lys-63'-linked polyubiquitin chains, which in turn are catalysts in the autophosphorylation of the MAP3K7/TAK1 complex (includes TAK1, TAB2, and TAB3). Activation of the MAP3K7/TAK1 complex by autophosphorylation results in the induction and expression of NF-kappa-B and MAPK-responsive inflammatory genes, thereby leading to an innate immune response in the infected cell. Plays a role in regulating autophagy through activation of autophagy regulator BECN1 by causing its dissociation from its inhibitors BCL2 and TAB2. This is Tripartite motif-containing protein 5 (TRIM5) from Colobus guereza (Mantled guereza).